Here is a 280-residue protein sequence, read N- to C-terminus: Beta-lactamase OXA-58 (280 aa).

Residues 1–18 (MKLLKILSLVCLSISIGA) form the signal peptide. C19 is lipidated: N-palmitoyl cysteine. C19 is lipidated: S-diacylglycerol cysteine. The active-site Acyl-ester intermediate is the S83. 6 residues coordinate a beta-lactam: S83, K86, S130, S221, W223, and R263. K86 carries the post-translational modification N6-carboxylysine.

The protein belongs to the class-D beta-lactamase family. Monomer. Dimer. Post-translationally, carboxylated on the epsilon-amino group of a lysine, with the resulting carbamate functional group serving as a general base. Probably N-carboxylated at Lys-86 at neutral pH in vivo and undergoes complete N-decarboxylation, at pH 4.1, in vitro. N-carboxylation at Lys-86 probably increases catalytic activity under physiological conditions.

The protein localises to the cell membrane. It carries out the reaction a beta-lactam + H2O = a substituted beta-amino acid. Its activity is regulated as follows. Activated approximately 3-fold by the presence of 0.1M NaHCO3. Class D beta-lactamase which confers resistance to the beta-lactam antibiotics, including penicillins and oxacillin, and moderate resistance to carbapenems such as imipenem; in the DH10B strain of E.coli. Acts via hydrolysis of the beta-lactam ring. Has benzylpenicillin-, oxacillin-, cephalothin- and imipenem-hydrolyzing activities. This Acinetobacter baumannii protein is Beta-lactamase OXA-58.